Reading from the N-terminus, the 432-residue chain is Cyclic di-GMP phosphodiesterase CdgJ (432 aa).

The EAL domain occupies 1–232 (MVRCLWAAEC…QRYVSPEHVI (232 aa)). The region spanning 226–413 (VSPEHVIAMQ…CLELGFDLED (188 aa)) is the HDOD domain.

The enzyme catalyses 3',3'-c-di-GMP + H2O = 5'-phosphoguanylyl(3'-&gt;5')guanosine + H(+). In terms of biological role, phosphodiesterase (PDE) that catalyzes the hydrolysis of cyclic diguanylate (c-di-GMP). Positively regulates motility and negatively regulates biofilm formation. This is Cyclic di-GMP phosphodiesterase CdgJ from Vibrio cholerae serotype O1 (strain ATCC 39315 / El Tor Inaba N16961).